The primary structure comprises 161 residues: Nucleotide-binding protein Vapar_3769 (161 aa).

Belongs to the YajQ family.

Nucleotide-binding protein. The protein is Nucleotide-binding protein Vapar_3769 of Variovorax paradoxus (strain S110).